A 130-amino-acid chain; its full sequence is Large ribosomal subunit protein bL20 (130 aa).

This sequence belongs to the bacterial ribosomal protein bL20 family.

In terms of biological role, binds directly to 23S ribosomal RNA and is necessary for the in vitro assembly process of the 50S ribosomal subunit. It is not involved in the protein synthesizing functions of that subunit. The polypeptide is Large ribosomal subunit protein bL20 (Solibacter usitatus (strain Ellin6076)).